We begin with the raw amino-acid sequence, 89 residues long: UPF0223 protein BcerKBAB4_3787 (89 aa).

Belongs to the UPF0223 family.

This Bacillus mycoides (strain KBAB4) (Bacillus weihenstephanensis) protein is UPF0223 protein BcerKBAB4_3787.